The following is a 194-amino-acid chain: NADH-quinone oxidoreductase subunit B (194 aa).

Positions 1 to 11 (MGVIATPPPSV) are enriched in pro residues. The tract at residues 1-24 (MGVIATPPPSVQGPSSQVPSSAPI) is disordered. The span at 12–21 (QGPSSQVPSS) shows a compositional bias: low complexity. The [4Fe-4S] cluster site is built by Cys72, Cys73, Cys137, and Cys167.

This sequence belongs to the complex I 20 kDa subunit family. In terms of assembly, NDH-1 is composed of 14 different subunits. Subunits NuoB, C, D, E, F, and G constitute the peripheral sector of the complex. [4Fe-4S] cluster serves as cofactor.

Its subcellular location is the cell inner membrane. It carries out the reaction a quinone + NADH + 5 H(+)(in) = a quinol + NAD(+) + 4 H(+)(out). In terms of biological role, NDH-1 shuttles electrons from NADH, via FMN and iron-sulfur (Fe-S) centers, to quinones in the respiratory chain. The immediate electron acceptor for the enzyme in this species is believed to be ubiquinone. Couples the redox reaction to proton translocation (for every two electrons transferred, four hydrogen ions are translocated across the cytoplasmic membrane), and thus conserves the redox energy in a proton gradient. This chain is NADH-quinone oxidoreductase subunit B, found in Rhodospirillum centenum (strain ATCC 51521 / SW).